Consider the following 593-residue polypeptide: Double-stranded RNA-binding protein 2 (593 aa).

DRBM domains lie at Met-1–Lys-70 and Ile-87–Gln-155. A compositionally biased stretch (polar residues) spans Leu-188–Pro-197. Disordered regions lie at residues Leu-188–Ala-221, Ala-357–Gln-408, and Val-546–Ile-593. The segment covering Ser-205 to Ser-219 has biased composition (low complexity). Residues Glu-378–Gln-408 are compositionally biased toward polar residues. The segment covering Arg-572–Ser-586 has biased composition (low complexity).

Binds double-stranded RNA. The chain is Double-stranded RNA-binding protein 2 (DRB2) from Oryza sativa subsp. japonica (Rice).